The following is a 310-amino-acid chain: Malate dehydrogenase (310 aa).

Residues 7-12 (GAGNVG) and aspartate 32 contribute to the NAD(+) site. Substrate contacts are provided by arginine 81 and arginine 87. Residues asparagine 94 and 117-119 (VSN) each bind NAD(+). 2 residues coordinate substrate: asparagine 119 and arginine 150. Catalysis depends on histidine 174, which acts as the Proton acceptor.

The protein belongs to the LDH/MDH superfamily. MDH type 3 family. Homotetramer; arranged as a dimer of dimers.

The catalysed reaction is (S)-malate + NAD(+) = oxaloacetate + NADH + H(+). Catalyzes the reversible oxidation of malate to oxaloacetate. This Prosthecochloris vibrioformis (Chlorobium vibrioforme) protein is Malate dehydrogenase.